A 486-amino-acid polypeptide reads, in one-letter code: Scarecrow-like protein 15 (486 aa).

The segment at 1–28 is disordered; it reads MKIPASSPQDTTNNNNNTNSTDSNHLSM. Low complexity predominate over residues 10-24; the sequence is DTTNNNNNTNSTDSN. One can recognise a GRAS domain in the interval 113–485; that stretch reads DSVDNGGFDF…RALVATSAWR (373 aa). A leucine repeat I (LRI) region spans residues 120–179; that stretch reads FDFIEDLIRVVDCVESDELQLAQVVLSRLNQRLRSPAGRPLQRAAFYFKEALGSFLTGSN. A VHIID region spans residues 198 to 266; it reads IKEYSGISPI…VSGGFLRVTA (69 aa). Residues 232-236 carry the VHIID motif; the sequence is VHVVD. The segment at 278–310 is leucine repeat II (LRII); the sequence is LVKENLTQFAAEMKIRFQIEFVLMKTFEMLSFK. The PFYRE stretch occupies residues 320-410; sequence TVVLISPAIF…AFVLRPKISA (91 aa). Positions 413–485 are SAW; sequence ETAADRRHTG…RALVATSAWR (73 aa).

This sequence belongs to the GRAS family. In terms of tissue distribution, expressed in seedlings, roots, leaves and flowers.

It is found in the nucleus. Functionally, probable transcription factor involved in plant development. This chain is Scarecrow-like protein 15 (SCL15), found in Arabidopsis thaliana (Mouse-ear cress).